We begin with the raw amino-acid sequence, 286 residues long: Protein NipSnap homolog 2 (286 aa).

Residues 1 to 40 constitute a mitochondrion transit peptide; sequence MATRVLHSSCSGLYRAAGPARGKGHATAVIRSLSASHNRP.

This sequence belongs to the NipSnap family.

Its subcellular location is the mitochondrion matrix. Functionally, protein involved in mitophagy. Accumulates on the mitochondria surface in response to mitochondrial depolarization and acts as a 'eat me' signal by recruiting proteins involved in selective autophagy. The protein is Protein NipSnap homolog 2 (nipsnap2) of Danio rerio (Zebrafish).